A 207-amino-acid polypeptide reads, in one-letter code: Ras-related protein Rab-8A (207 aa).

GTP contacts are provided by S17, G18, V19, G20, K21, T22, C23, S39, and T40. A Mg(2+)-binding site is contributed by T22. 2 short sequence motifs (switch) span residues 31–45 (DAFNATFISTIGIDF) and 63–80 (DTAGQERFRTITTAYYRG). 2 residues coordinate Mg(2+): T40 and D63. 6 residues coordinate GTP: G66, N121, K122, D124, A152, and K153. The residue at position 204 (C204) is a Cysteine methyl ester. C204 is lipidated: S-geranylgeranyl cysteine. A propeptide spans 205–207 (VLL) (removed in mature form).

This sequence belongs to the small GTPase superfamily. Rab family. It depends on Mg(2+) as a cofactor.

It localises to the cell membrane. Its subcellular location is the golgi apparatus. The protein resides in the endosome membrane. It is found in the recycling endosome membrane. The protein localises to the cell projection. It localises to the cilium. Its subcellular location is the cytoplasmic vesicle. The protein resides in the phagosome membrane. It is found in the cytoplasm. The protein localises to the cytoskeleton. It localises to the microtubule organizing center. Its subcellular location is the centrosome. The protein resides in the centriole. It is found in the cilium basal body. The protein localises to the midbody. It carries out the reaction GTP + H2O = GDP + phosphate + H(+). With respect to regulation, regulated by guanine nucleotide exchange factors (GEFs) which promote the exchange of bound GDP for free GTP, GTPase activating proteins (GAPs) which increase the GTP hydrolysis activity, and GDP dissociation inhibitors (GDIs) which inhibit the dissociation of the nucleotide from the GTPase. Activated in response to insulin. In terms of biological role, the small GTPases Rab are key regulators of intracellular membrane trafficking, from the formation of transport vesicles to their fusion with membranes. Rabs cycle between an inactive GDP-bound form and an active GTP-bound form that is able to recruit to membranes different sets of downstream effectors directly responsible for vesicle formation, movement, tethering and fusion. RAB8A is involved in polarized vesicular trafficking and neurotransmitter release. Together with RAB11A, RAB3IP, the exocyst complex, PARD3, PRKCI, ANXA2, CDC42 and DNMBP promotes transcytosis of PODXL to the apical membrane initiation sites (AMIS), apical surface formation and lumenogenesis. Regulates the compacted morphology of the Golgi. Together with MYO5B and RAB11A participates in epithelial cell polarization. Also involved in membrane trafficking to the cilium and ciliogenesis. Together with MICALL2, may also regulate adherens junction assembly. May play a role in insulin-induced transport to the plasma membrane of the glucose transporter GLUT4 and therefore play a role in glucose homeostasis. Involved in autophagy. Participates in the export of a subset of neosynthesized proteins through a Rab8-Rab10-Rab11-dependent endososomal export route. Targeted to and stabilized on stressed lysosomes through LRRK2 phosphorylation. Suppresses stress-induced lysosomal enlargement through EHBP1 and EHNP1L1 effector proteins. In Gallus gallus (Chicken), this protein is Ras-related protein Rab-8A (RAB8A).